We begin with the raw amino-acid sequence, 126 residues long: Holo-[acyl-carrier-protein] synthase (126 aa).

Positions 9 and 58 each coordinate Mg(2+).

It belongs to the P-Pant transferase superfamily. AcpS family. It depends on Mg(2+) as a cofactor.

It is found in the cytoplasm. The enzyme catalyses apo-[ACP] + CoA = holo-[ACP] + adenosine 3',5'-bisphosphate + H(+). Transfers the 4'-phosphopantetheine moiety from coenzyme A to a Ser of acyl-carrier-protein. This is Holo-[acyl-carrier-protein] synthase from Cronobacter sakazakii (strain ATCC BAA-894) (Enterobacter sakazakii).